The sequence spans 236 residues: Virion protein US10 homolog (236 aa).

The interval 1-32 (MDGAYGHVHNGSPMAVDGEESGAGTGTGAGAD) is disordered. Positions 21–31 (SGAGTGTGAGA) are enriched in gly residues. A zinc finger spans residues 138–150 (CAYWCCLGHAFAC).

Belongs to the herpesviridae US10 family. Post-translationally, phosphorylated.

It localises to the virion tegument. It is found in the host nucleus matrix. In Equine herpesvirus 1 (strain Ab4p) (EHV-1), this protein is Virion protein US10 homolog.